Here is a 100-residue protein sequence, read N- to C-terminus: Small ribosomal subunit protein uS14 (100 aa).

Belongs to the universal ribosomal protein uS14 family. In terms of assembly, part of the 30S ribosomal subunit. Contacts proteins S3 and S10.

Binds 16S rRNA, required for the assembly of 30S particles and may also be responsible for determining the conformation of the 16S rRNA at the A site. The chain is Small ribosomal subunit protein uS14 from Microcystis aeruginosa (strain NIES-843 / IAM M-2473).